The primary structure comprises 204 residues: NADH-ubiquinone oxidoreductase chain 6 (204 aa).

The next 5 helical transmembrane spans lie at 5-25 (IFLF…VIGL), 29-49 (VHSV…LLLL), 56-76 (FMLI…VVMM), 91-111 (LWPI…SSFY), and 151-171 (LLFL…IVLT).

Belongs to the complex I subunit 6 family.

It localises to the mitochondrion membrane. The catalysed reaction is a ubiquinone + NADH + 5 H(+)(in) = a ubiquinol + NAD(+) + 4 H(+)(out). Core subunit of the mitochondrial membrane respiratory chain NADH dehydrogenase (Complex I) that is believed to belong to the minimal assembly required for catalysis. Complex I functions in the transfer of electrons from NADH to the respiratory chain. The immediate electron acceptor for the enzyme is believed to be ubiquinone. The sequence is that of NADH-ubiquinone oxidoreductase chain 6 (ND6) from Chondrus crispus (Carrageen Irish moss).